The following is a 354-amino-acid chain: Uroporphyrinogen decarboxylase (354 aa).

Substrate contacts are provided by residues 27–31 (RQAGR), D77, Y153, T208, and H326.

Belongs to the uroporphyrinogen decarboxylase family. In terms of assembly, homodimer.

The protein localises to the cytoplasm. It carries out the reaction uroporphyrinogen III + 4 H(+) = coproporphyrinogen III + 4 CO2. Its pathway is porphyrin-containing compound metabolism; protoporphyrin-IX biosynthesis; coproporphyrinogen-III from 5-aminolevulinate: step 4/4. In terms of biological role, catalyzes the decarboxylation of four acetate groups of uroporphyrinogen-III to yield coproporphyrinogen-III. This Neisseria gonorrhoeae (strain NCCP11945) protein is Uroporphyrinogen decarboxylase.